Consider the following 1171-residue polypeptide: DNA-directed RNA polymerase subunit beta (1171 aa).

It belongs to the RNA polymerase beta chain family. In terms of assembly, the RNAP catalytic core consists of 2 alpha, 1 beta, 1 beta' and 1 omega subunit. When a sigma factor is associated with the core the holoenzyme is formed, which can initiate transcription.

The enzyme catalyses RNA(n) + a ribonucleoside 5'-triphosphate = RNA(n+1) + diphosphate. In terms of biological role, DNA-dependent RNA polymerase catalyzes the transcription of DNA into RNA using the four ribonucleoside triphosphates as substrates. In Arthrobacter sp. (strain FB24), this protein is DNA-directed RNA polymerase subunit beta.